We begin with the raw amino-acid sequence, 123 residues long: Large ribosomal subunit protein uL14 (123 aa).

It belongs to the universal ribosomal protein uL14 family. Part of the 50S ribosomal subunit. Forms a cluster with proteins L3 and L19. In the 70S ribosome, L14 and L19 interact and together make contacts with the 16S rRNA in bridges B5 and B8.

Functionally, binds to 23S rRNA. Forms part of two intersubunit bridges in the 70S ribosome. This Cronobacter sakazakii (strain ATCC BAA-894) (Enterobacter sakazakii) protein is Large ribosomal subunit protein uL14.